A 313-amino-acid chain; its full sequence is Tagatose-6-phosphate kinase (313 aa).

It belongs to the carbohydrate kinase PfkB family. LacC subfamily.

The enzyme catalyses D-tagatofuranose 6-phosphate + ATP = D-tagatofuranose 1,6-bisphosphate + ADP + H(+). Its pathway is carbohydrate metabolism; D-tagatose 6-phosphate degradation; D-glyceraldehyde 3-phosphate and glycerone phosphate from D-tagatose 6-phosphate: step 1/2. The chain is Tagatose-6-phosphate kinase from Enterococcus faecalis (strain ATCC 700802 / V583).